A 998-amino-acid chain; its full sequence is Type II restriction enzyme and methyltransferase RM.Eco57I (998 aa).

This sequence in the C-terminal section; belongs to the N(4)/N(6)-methyltransferase family. Monomer.

It carries out the reaction Endonucleolytic cleavage of DNA to give specific double-stranded fragments with terminal 5'-phosphates.. The catalysed reaction is a 2'-deoxyadenosine in DNA + S-adenosyl-L-methionine = an N(6)-methyl-2'-deoxyadenosine in DNA + S-adenosyl-L-homocysteine + H(+). Mg(2+) is absolutely required for DNA restriction. Functionally, an E, G and S subtype restriction enzyme that recognizes the (non-palindromic) double-stranded sequence 5'-CTGAAG-3' and cleaves respectively 22 bases after C-1 and 14 bases before C'-1; cleavage of lambda DNA is never complete. Also acts as a methylase that causes specific methylation on A-5 in 5'-CTGAAG-3', the other strand is methylated by the M.Eco57I methylase. The chain is Type II restriction enzyme and methyltransferase RM.Eco57I from Escherichia coli.